The following is a 194-amino-acid chain: Fe/S biogenesis protein NfuA (194 aa).

Cys151 and Cys154 together coordinate [4Fe-4S] cluster.

Belongs to the NfuA family. In terms of assembly, homodimer. [4Fe-4S] cluster serves as cofactor.

Involved in iron-sulfur cluster biogenesis. Binds a 4Fe-4S cluster, can transfer this cluster to apoproteins, and thereby intervenes in the maturation of Fe/S proteins. Could also act as a scaffold/chaperone for damaged Fe/S proteins. This Aliivibrio salmonicida (strain LFI1238) (Vibrio salmonicida (strain LFI1238)) protein is Fe/S biogenesis protein NfuA.